A 209-amino-acid polypeptide reads, in one-letter code: Putative thymidylate synthase (209 aa).

Cysteine 137 is an active-site residue.

It belongs to the thymidylate synthase family. Archaeal-type ThyA subfamily. In terms of assembly, monomer.

The protein resides in the cytoplasm. It participates in pyrimidine metabolism; dTTP biosynthesis. In terms of biological role, may catalyze the biosynthesis of dTMP using an unknown cosubstrate. The chain is Putative thymidylate synthase from Methanopyrus kandleri (strain AV19 / DSM 6324 / JCM 9639 / NBRC 100938).